The primary structure comprises 618 residues: Pyranose 2-oxidase (618 aa).

A Tele-8alpha-FAD histidine modification is found at His170. Residues Gln441 and His443 each contribute to the substrate site. His540 (proton acceptor) is an active-site residue. Residue Asn583 is part of the active site.

The protein belongs to the GMC oxidoreductase family. As to quaternary structure, homotetramer. It depends on FAD as a cofactor.

It carries out the reaction D-glucose + O2 = 2-dehydro-D-glucose + H2O2. Its function is as follows. Catalyzes the oxidation of various aldopyranoses and disaccharides on carbon-2 to the corresponding 2-keto sugars concomitant with the reduction of O(2) to H(2)O(2). The sequence is that of Pyranose 2-oxidase (p2ox) from Lyophyllum shimeji (Hon-shimeji).